A 178-amino-acid polypeptide reads, in one-letter code: Peptidyl-prolyl cis-trans isomerase (178 aa).

Residues 1 to 17 form the signal peptide; the sequence is MKLLFFFLVLAVSAAVA. The 152-residue stretch at 26–177 folds into the PPIase cyclophilin-type domain; sequence FMDIEIDGES…KIAKITDIGL (152 aa).

It belongs to the cyclophilin-type PPIase family. PPIase A subfamily.

It catalyses the reaction [protein]-peptidylproline (omega=180) = [protein]-peptidylproline (omega=0). In terms of biological role, PPIases accelerate the folding of proteins. It catalyzes the cis-trans isomerization of proline imidic peptide bonds in oligopeptides. Up-regulates interferon gamma production by bovine T-cells. Stimulates high levels of IFN-gamma production by peripheral blood mononuclear cells and T-cells. The IFN-gamma-inducing effect is blocked by cyclosporin A (CsA). The polypeptide is Peptidyl-prolyl cis-trans isomerase (Neospora caninum (Coccidian parasite)).